The following is a 445-amino-acid chain: Trigger factor (445 aa).

The region spanning 172–257 is the PPIase FKBP-type domain; it reads GDQVVINFVG…VKSVNWAHLP (86 aa).

It belongs to the FKBP-type PPIase family. Tig subfamily.

It localises to the cytoplasm. The enzyme catalyses [protein]-peptidylproline (omega=180) = [protein]-peptidylproline (omega=0). Involved in protein export. Acts as a chaperone by maintaining the newly synthesized protein in an open conformation. Functions as a peptidyl-prolyl cis-trans isomerase. This chain is Trigger factor, found in Polynucleobacter necessarius subsp. necessarius (strain STIR1).